Reading from the N-terminus, the 201-residue chain is Large ribosomal subunit protein mL61 (201 aa).

The segment at 87–118 (RDDKDAKPSSTPFPTSSADGSSPAPKPAQGER) is disordered. Residues 94 to 106 (PSSTPFPTSSADG) are compositionally biased toward polar residues.

The protein belongs to the mitochondrion-specific ribosomal protein mL61 family. Component of the mitochondrial large ribosomal subunit (mt-LSU). Mature N.crassa 74S mitochondrial ribosomes consist of a small (37S) and a large (54S) subunit. The 37S small subunit contains a 16S ribosomal RNA (16S mt-rRNA) and 32 different proteins. The 54S large subunit contains a 23S rRNA (23S mt-rRNA) and 42 different proteins.

Its subcellular location is the mitochondrion. Its function is as follows. Component of the mitochondrial ribosome (mitoribosome), a dedicated translation machinery responsible for the synthesis of mitochondrial genome-encoded proteins, including at least some of the essential transmembrane subunits of the mitochondrial respiratory chain. The mitoribosomes are attached to the mitochondrial inner membrane and translation products are cotranslationally integrated into the membrane. The chain is Large ribosomal subunit protein mL61 (mrp49) from Neurospora crassa (strain ATCC 24698 / 74-OR23-1A / CBS 708.71 / DSM 1257 / FGSC 987).